The sequence spans 444 residues: Trigger factor (444 aa).

The region spanning 166–251 (GDQVVIDFKG…VKAVKAPKAA (86 aa)) is the PPIase FKBP-type domain.

Belongs to the FKBP-type PPIase family. Tig subfamily.

It localises to the cytoplasm. The catalysed reaction is [protein]-peptidylproline (omega=180) = [protein]-peptidylproline (omega=0). Its function is as follows. Involved in protein export. Acts as a chaperone by maintaining the newly synthesized protein in an open conformation. Functions as a peptidyl-prolyl cis-trans isomerase. This chain is Trigger factor, found in Cereibacter sphaeroides (strain KD131 / KCTC 12085) (Rhodobacter sphaeroides).